A 397-amino-acid chain; its full sequence is Succinate--CoA ligase [ADP-forming] subunit beta (397 aa).

Residues 9 to 254 (KALLKSFGAP…KSEEDEKEIQ (246 aa)) enclose the ATP-grasp domain. Residues K46, 53-55 (GRG), E109, A112, and E117 each bind ATP. Mg(2+) contacts are provided by N209 and D223. Residues N274 and 331-333 (GIM) contribute to the substrate site.

Belongs to the succinate/malate CoA ligase beta subunit family. As to quaternary structure, heterotetramer of two alpha and two beta subunits. It depends on Mg(2+) as a cofactor.

It catalyses the reaction succinate + ATP + CoA = succinyl-CoA + ADP + phosphate. It carries out the reaction GTP + succinate + CoA = succinyl-CoA + GDP + phosphate. The protein operates within carbohydrate metabolism; tricarboxylic acid cycle; succinate from succinyl-CoA (ligase route): step 1/1. Functionally, succinyl-CoA synthetase functions in the citric acid cycle (TCA), coupling the hydrolysis of succinyl-CoA to the synthesis of either ATP or GTP and thus represents the only step of substrate-level phosphorylation in the TCA. The beta subunit provides nucleotide specificity of the enzyme and binds the substrate succinate, while the binding sites for coenzyme A and phosphate are found in the alpha subunit. The protein is Succinate--CoA ligase [ADP-forming] subunit beta of Rhizobium rhizogenes (strain K84 / ATCC BAA-868) (Agrobacterium radiobacter).